Here is a 329-residue protein sequence, read N- to C-terminus: Mas-related G-protein coupled receptor member X2 (329 aa).

Residues 1–33 (MDPTTPAWGTESTTMDGNDQSLPLLCDKEALIP) lie on the Extracellular side of the membrane. Residues 34–54 (VFLILFIALVGLVGNGFVLWL) form a helical membrane-spanning segment. The Cytoplasmic segment spans residues 55–63 (LGFRMSRNA). A helical membrane pass occupies residues 64–84 (FSVYVLSLAGADFLFLCFQII). Residues 85-96 (NCLVYLRDFFCS) are Extracellular-facing. A helical transmembrane segment spans residues 97-117 (ISINFPSXFTTVMTCAYLAGL). The Cytoplasmic portion of the chain corresponds to 118 to 144 (SMLSTISTERCLSVLWPIWYRCRRPRH). The helical transmembrane segment at 145–165 (LSAVVCVLLWALSLLLSILEG) threads the bilayer. At 166 to 184 (KFCGFLFSDGDFGWCQIFD) the chain is on the extracellular side. Residues 185-205 (FITAAWLIFLFVVLCASSLAL) form a helical membrane-spanning segment. The Cytoplasmic segment spans residues 206 to 228 (LVRILCGSRGLPLTRLYLTILLT). Residues 229–249 (VLVFLLCGLPFGIQWFLILGF) traverse the membrane as a helical segment. At 250 to 263 (WNSDVLLCHIHLVS) the chain is on the extracellular side. A helical membrane pass occupies residues 264-284 (VVLSSLNSSANPIIYFFVGSF). Topologically, residues 285–329 (RKQWRLQQPILKLAFQRALQDTAEVDHSEGCFPQGTSEMSRSSLV) are cytoplasmic.

The protein belongs to the G-protein coupled receptor 1 family. Mas subfamily.

It is found in the cell membrane. Functionally, mast cell-specific receptor for basic secretagogues, i.e. cationic amphiphilic drugs, as well as endo- or exogenous peptides, consisting of a basic head group and a hydrophobic core. Recognizes and binds small molecules containing a cyclized tetrahydroisoquinoline (THIQ), such as non-steroidal neuromuscular blocking drugs (NMBDs), including tubocurarine and atracurium. In response to these compounds, mediates pseudo-allergic reactions characterized by histamine release, inflammation and airway contraction. The chain is Mas-related G-protein coupled receptor member X2 (MRGPRX2) from Hoolock hoolock (Western hoolock gibbon).